A 118-amino-acid polypeptide reads, in one-letter code: Large ribosomal subunit protein bL20 (118 aa).

This sequence belongs to the bacterial ribosomal protein bL20 family.

Functionally, binds directly to 23S ribosomal RNA and is necessary for the in vitro assembly process of the 50S ribosomal subunit. It is not involved in the protein synthesizing functions of that subunit. This Proteus mirabilis (strain HI4320) protein is Large ribosomal subunit protein bL20.